Consider the following 219-residue polypeptide: uncharacterized protein (219 aa).

The helical transmembrane segment at 28 to 50 (IVSSLIAGGYALFVSAFTSYVYT) threads the bilayer. Positions 155-218 (EILRESLSEI…EEIEKELEFF (64 aa)) form a coiled coil.

It is found in the membrane. This is an uncharacterized protein from Aquifex aeolicus (strain VF5).